A 365-amino-acid polypeptide reads, in one-letter code: Histidinol-phosphate aminotransferase (365 aa).

Residue Lys-227 is modified to N6-(pyridoxal phosphate)lysine.

It belongs to the class-II pyridoxal-phosphate-dependent aminotransferase family. Histidinol-phosphate aminotransferase subfamily. As to quaternary structure, homodimer. Pyridoxal 5'-phosphate serves as cofactor.

The catalysed reaction is L-histidinol phosphate + 2-oxoglutarate = 3-(imidazol-4-yl)-2-oxopropyl phosphate + L-glutamate. It participates in amino-acid biosynthesis; L-histidine biosynthesis; L-histidine from 5-phospho-alpha-D-ribose 1-diphosphate: step 7/9. This is Histidinol-phosphate aminotransferase from Polaromonas naphthalenivorans (strain CJ2).